We begin with the raw amino-acid sequence, 526 residues long: Lysine--tRNA ligase (526 aa).

Residues E431 and E438 each coordinate Mg(2+).

The protein belongs to the class-II aminoacyl-tRNA synthetase family. As to quaternary structure, homodimer. It depends on Mg(2+) as a cofactor.

The protein localises to the cytoplasm. The catalysed reaction is tRNA(Lys) + L-lysine + ATP = L-lysyl-tRNA(Lys) + AMP + diphosphate. This chain is Lysine--tRNA ligase, found in Chlamydia trachomatis serovar L2b (strain UCH-1/proctitis).